The primary structure comprises 92 residues: Cell division protein FtsB (92 aa).

Residues 1-3 (MKV) lie on the Cytoplasmic side of the membrane. A helical transmembrane segment spans residues 4–21 (VPILLFVLLAALQYRLWF). Residues 22 to 92 (GKNSIPEYVA…TFYRILPSEE (71 aa)) are Periplasmic-facing. A coiled-coil region spans residues 31 to 74 (AMEKSVAEQAEQNTELLQRNNLLKADIQDLKVGLEAVEERARNE).

This sequence belongs to the FtsB family. In terms of assembly, part of a complex composed of FtsB, FtsL and FtsQ.

The protein resides in the cell inner membrane. Functionally, essential cell division protein. May link together the upstream cell division proteins, which are predominantly cytoplasmic, with the downstream cell division proteins, which are predominantly periplasmic. This chain is Cell division protein FtsB, found in Pseudoalteromonas atlantica (strain T6c / ATCC BAA-1087).